Here is a 233-residue protein sequence, read N- to C-terminus: Defense protein 3 (233 aa).

The N-terminal stretch at 1-17 (MFGKFVLLAVLLVGVNS) is a signal peptide. The propeptide occupies 18–45 (RYVIIEDPVYYIEDHELPEQWTSSRVRR).

It belongs to the attacin/sarcotoxin-2 family.

It localises to the secreted. Has antibacterial activity against both Gram-positive and Gram-negative bacteria. The polypeptide is Defense protein 3 (Lonomia obliqua (Moth)).